We begin with the raw amino-acid sequence, 1261 residues long: SNF2 domain-containing protein CLASSY 2 (1261 aa).

The tract at residues 458-479 is disordered; it reads FQKRTSRSSRSVAPKTEDSDEP. The region spanning 704–904 is the Helicase ATP-binding domain; that stretch reads DPTSGNIGGC…FNTLCLARPK (201 aa). An ATP-binding site is contributed by 717–724; sequence HSPGAGKT. The DEAH box motif lies at 855-858; the sequence is DEGH. The 166-residue stretch at 1067 to 1232 folds into the Helicase C-terminal domain; the sequence is FVLNLIFRVV…DPSLWQAEKI (166 aa).

It belongs to the helicase family. In terms of assembly, interacts with NRPD1 and SHH1.

It localises to the nucleus. In terms of biological role, probable chromatin remodeling factor. The protein is SNF2 domain-containing protein CLASSY 2 (CLSY2) of Arabidopsis thaliana (Mouse-ear cress).